Consider the following 505-residue polypeptide: Maturase K (505 aa).

The protein belongs to the intron maturase 2 family. MatK subfamily.

It is found in the plastid. It localises to the chloroplast. Usually encoded in the trnK tRNA gene intron. Probably assists in splicing its own and other chloroplast group II introns. The sequence is that of Maturase K from Blitum bonus-henricus (Good King Henry).